Consider the following 545-residue polypeptide: Chaperonin GroEL (545 aa).

ATP-binding positions include T30–P33, K51, D87–T91, G415, and D496.

This sequence belongs to the chaperonin (HSP60) family. Forms a cylinder of 14 subunits composed of two heptameric rings stacked back-to-back. Interacts with the co-chaperonin GroES.

The protein localises to the cytoplasm. The enzyme catalyses ATP + H2O + a folded polypeptide = ADP + phosphate + an unfolded polypeptide.. Together with its co-chaperonin GroES, plays an essential role in assisting protein folding. The GroEL-GroES system forms a nano-cage that allows encapsulation of the non-native substrate proteins and provides a physical environment optimized to promote and accelerate protein folding. The sequence is that of Chaperonin GroEL from Haemophilus influenzae (strain 86-028NP).